Here is a 98-residue protein sequence, read N- to C-terminus: Large ribosomal subunit protein eL21 (98 aa).

This sequence belongs to the eukaryotic ribosomal protein eL21 family.

In Korarchaeum cryptofilum (strain OPF8), this protein is Large ribosomal subunit protein eL21.